Consider the following 605-residue polypeptide: Glutamine--fructose-6-phosphate aminotransferase [isomerizing] (605 aa).

Cys-2 acts as the Nucleophile; for GATase activity in catalysis. The Glutamine amidotransferase type-2 domain maps to 2–216 (CGIVGIVGHQ…DGDWAVIGKT (215 aa)). 2 consecutive SIS domains span residues 280 to 420 (DSDA…ARGT) and 454 to 595 (LSRE…VDQP). Lys-600 (for Fru-6P isomerization activity) is an active-site residue.

It localises to the cytoplasm. The enzyme catalyses D-fructose 6-phosphate + L-glutamine = D-glucosamine 6-phosphate + L-glutamate. In terms of biological role, involved in the production of the root hair deformation (HAD) factor specifically on medicago. The chain is Glutamine--fructose-6-phosphate aminotransferase [isomerizing] (nodM) from Rhizobium meliloti (Ensifer meliloti).